A 421-amino-acid chain; its full sequence is UDP-N-acetylglucosamine 1-carboxyvinyltransferase (421 aa).

Phosphoenolpyruvate is bound at residue K22–N23. R92 contributes to the UDP-N-acetyl-alpha-D-glucosamine binding site. C116 functions as the Proton donor in the catalytic mechanism. 2-(S-cysteinyl)pyruvic acid O-phosphothioketal is present on C116. The UDP-N-acetyl-alpha-D-glucosamine site is built by D307 and V329.

It belongs to the EPSP synthase family. MurA subfamily.

The protein localises to the cytoplasm. It catalyses the reaction phosphoenolpyruvate + UDP-N-acetyl-alpha-D-glucosamine = UDP-N-acetyl-3-O-(1-carboxyvinyl)-alpha-D-glucosamine + phosphate. Its pathway is cell wall biogenesis; peptidoglycan biosynthesis. Functionally, cell wall formation. Adds enolpyruvyl to UDP-N-acetylglucosamine. The sequence is that of UDP-N-acetylglucosamine 1-carboxyvinyltransferase from Kosmotoga olearia (strain ATCC BAA-1733 / DSM 21960 / TBF 19.5.1).